Reading from the N-terminus, the 407-residue chain is [Pyruvate dehydrogenase (acetyl-transferring)] kinase isozyme 2, mitochondrial (407 aa).

The Histidine kinase domain occupies 135 to 364 (LEYKDTYGDD…DAVIYLKALS (230 aa)). Phosphotyrosine is present on residues Tyr215 and Tyr216. ATP is bound by residues 251–258 (ELFKNAMR), Asp290, 309–310 (ST), and 325–330 (GFGYGL). Lys376 is subject to N6-succinyllysine.

The protein belongs to the PDK/BCKDK protein kinase family. As to quaternary structure, homodimer, and heterodimer with PDK1. Interacts with the pyruvate dehydrogenase complex subunit DLAT, and is part of the multimeric pyruvate dehydrogenase complex that contains multiple copies of pyruvate dehydrogenase (E1), dihydrolipoamide acetyltransferase (DLAT, E2) and lipoamide dehydrogenase (DLD, E3). In terms of tissue distribution, detected in heart (at protein level).

The protein resides in the mitochondrion matrix. It carries out the reaction L-seryl-[pyruvate dehydrogenase E1 alpha subunit] + ATP = O-phospho-L-seryl-[pyruvate dehydrogenase E1 alpha subunit] + ADP + H(+). Functionally, kinase that plays a key role in the regulation of glucose and fatty acid metabolism and homeostasis via phosphorylation of the pyruvate dehydrogenase subunits PDHA1 and PDHA2. This inhibits pyruvate dehydrogenase activity, and thereby regulates metabolite flux through the tricarboxylic acid cycle, down-regulates aerobic respiration and inhibits the formation of acetyl-coenzyme A from pyruvate. Inhibition of pyruvate dehydrogenase decreases glucose utilization and increases fat metabolism. Mediates cellular responses to insulin. Plays an important role in maintaining normal blood glucose levels and in metabolic adaptation to nutrient availability. Via its regulation of pyruvate dehydrogenase activity, plays an important role in maintaining normal blood pH and in preventing the accumulation of ketone bodies under starvation. Plays a role in the regulation of cell proliferation and in resistance to apoptosis under oxidative stress. Plays a role in p53/TP53-mediated apoptosis. This chain is [Pyruvate dehydrogenase (acetyl-transferring)] kinase isozyme 2, mitochondrial (Pdk2), found in Mus musculus (Mouse).